We begin with the raw amino-acid sequence, 159 residues long: Ribosomal RNA large subunit methyltransferase H (159 aa).

S-adenosyl-L-methionine-binding positions include Leu76, Gly108, and 127–132 (FSNMTF).

Belongs to the RNA methyltransferase RlmH family. As to quaternary structure, homodimer.

The protein localises to the cytoplasm. The catalysed reaction is pseudouridine(1915) in 23S rRNA + S-adenosyl-L-methionine = N(3)-methylpseudouridine(1915) in 23S rRNA + S-adenosyl-L-homocysteine + H(+). Functionally, specifically methylates the pseudouridine at position 1915 (m3Psi1915) in 23S rRNA. In Staphylococcus epidermidis (strain ATCC 35984 / DSM 28319 / BCRC 17069 / CCUG 31568 / BM 3577 / RP62A), this protein is Ribosomal RNA large subunit methyltransferase H.